Reading from the N-terminus, the 91-residue chain is Acyl carrier protein AsbD (91 aa).

The Carrier domain maps to 4–82; the sequence is EALKNAVLKI…SLLDFMEELQ (79 aa). An O-(pantetheine 4'-phosphoryl)serine modification is found at Ser-40.

It belongs to the acyl carrier protein (ACP) family. In terms of processing, activated by the transfer of a 4'-phosphopantetheine group from CoA to Ser-40.

It participates in siderophore biosynthesis; petrobactin biosynthesis. In terms of biological role, involved in the biosynthesis of petrobactin, a catecholate siderophore that functions in both iron acquisition and virulence. Aryl-carrier protein that activates 3,4-dihydroxybenzoate (3,4-DHBA) prior to its incorporation into petrobactin. The protein is Acyl carrier protein AsbD of Bacillus anthracis.